We begin with the raw amino-acid sequence, 200 residues long: Large ribosomal subunit protein bL25 (200 aa).

This sequence belongs to the bacterial ribosomal protein bL25 family. CTC subfamily. In terms of assembly, part of the 50S ribosomal subunit; part of the 5S rRNA/L5/L18/L25 subcomplex. Contacts the 5S rRNA. Binds to the 5S rRNA independently of L5 and L18.

In terms of biological role, this is one of the proteins that binds to the 5S RNA in the ribosome where it forms part of the central protuberance. This is Large ribosomal subunit protein bL25 from Nocardia farcinica (strain IFM 10152).